A 180-amino-acid chain; its full sequence is Cytochrome b6-f complex iron-sulfur subunit 2 (180 aa).

A helical membrane pass occupies residues 21–43 (LLTFGTITGVAAGALYPAVKYLI). The Rieske domain occupies 66-162 (VTEFLASHNA…ATVTDDDKLV (97 aa)). [2Fe-2S] cluster contacts are provided by Cys108, His110, Cys126, and His129. Cys113 and Cys128 are oxidised to a cystine.

Belongs to the Rieske iron-sulfur protein family. In terms of assembly, the 4 large subunits of the cytochrome b6-f complex are cytochrome b6, subunit IV (17 kDa polypeptide, PetD), cytochrome f and the Rieske protein, while the 4 small subunits are PetG, PetL, PetM and PetN. The complex functions as a dimer. It depends on [2Fe-2S] cluster as a cofactor.

The protein localises to the cellular thylakoid membrane. It catalyses the reaction 2 oxidized [plastocyanin] + a plastoquinol + 2 H(+)(in) = 2 reduced [plastocyanin] + a plastoquinone + 4 H(+)(out). Its function is as follows. Component of the cytochrome b6-f complex, which mediates electron transfer between photosystem II (PSII) and photosystem I (PSI), cyclic electron flow around PSI, and state transitions. The protein is Cytochrome b6-f complex iron-sulfur subunit 2 of Synechocystis sp. (strain ATCC 27184 / PCC 6803 / Kazusa).